We begin with the raw amino-acid sequence, 451 residues long: MQDIIGKIEDYSSKNGILLPDPVVEYVARIADEEKLKEPELQEMVRLFSRIAERNQGLDDDELLDAVEDDYQRILKVQELVKRKRARFPPKLIEDIAEVMKKHELSDDELDELIRRVRRAYDRARVEAGEAVGTVAAQSVGEPGTQMTMRTFHYAGVAELNVTLGLPRLIEIVDARKKISTPTMSIYFEGDLRYDEEFVRRKANKIGKSTLNDVLKNFSIQYADMSVVAELDEEKIQEKHLEYDEILAKVEKTFKKVEIDNNILRFEPPKPTIRELRLLADKVRKLQISGVKNIGKVVIRKEDDEWVIHTEGSNLGAVLKEEGVDKVRTTTNDIHEIETVLGIEAARNAIIHEAKRTMEEQGLTVDIRHIMLVADMMTADGSVKSIGRHGISGEKASVLARASFEETGKHLLRASIRGEVDHLTGIIENIIIGQPIPLGTGSVSVVMKERK.

A unknown region spans residues 1–68; that stretch reads MQDIIGKIED…DDDELLDAVE (68 aa). The segment at 69–451 is DNA-directed RNA polymerase subunit Rpo1C; that stretch reads DDYQRILKVQ…SVSVVMKERK (383 aa).

It belongs to the RNA polymerase beta' chain family. As to quaternary structure, part of the RNA polymerase complex.

Its subcellular location is the cytoplasm. The catalysed reaction is RNA(n) + a ribonucleoside 5'-triphosphate = RNA(n+1) + diphosphate. In terms of biological role, DNA-dependent RNA polymerase (RNAP) catalyzes the transcription of DNA into RNA using the four ribonucleoside triphosphates as substrates. Forms part of the jaw domain. The protein is DNA-directed RNA polymerase subunit Rpo1C of Methanothermobacter thermautotrophicus (strain ATCC 29096 / DSM 1053 / JCM 10044 / NBRC 100330 / Delta H) (Methanobacterium thermoautotrophicum).